Here is a 496-residue protein sequence, read N- to C-terminus: Versicolorin B desaturase stcL (496 aa).

A helical transmembrane segment spans residues 3-23; sequence FLSLPILTALGAVVYVLFQLV. A heme-binding site is contributed by Cys-440.

This sequence belongs to the cytochrome P450 family. Heme serves as cofactor.

The protein localises to the membrane. It carries out the reaction versicolorin B + NADPH + O2 + H(+) = versicolorin A + NADP(+) + 2 H2O. The protein operates within mycotoxin biosynthesis; sterigmatocystin biosynthesis. Functionally, cytochrome P450 monooxygenase; part of the gene cluster that mediates the biosynthesis of sterigmatocystin (ST), a polyketide-derived furanocoumarin which is part of the most toxic and carcinogenic compounds among the known mycotoxins. The first step in the biosynthesis of sterigmatocystin is the production of hexanoate by the fatty acid synthase (FAS) units stcJ and stcK. The polyketide backbone is assembled by the non-reducing polyketide synthase stcA by condensation of the starter hexanoyl-CoA and 7 malonyl-CoA extender units followed by cyclization and release of norsolorinic acid. Norsolorinic acid is the first stable intermediate in the biosynthesis of sterigmatocystin and is converted into averantin (AVN) by the ketoreductase stcE which reduces the hexanoate ketone to an alcohol. Averantin is then oxidized into 5'-hydroxyaverantin (HAVN) by the cytochrome P450 monooxygenase stcF. 5'-hydroxyaverantin is further converted to 5'-oxyaverantin (OAVN) by the 5'-hydroxyaverantin dehydrogenase stcG. The next step is the conversion of OAVN into averufin (AVF) which is catalyzed by a yet to be identified enzyme. The cytochrome P450 monooxygenase stcB and the flavin-binding monooxygenase stcW are both required for the conversion of averufin to 1-hydroxyversicolorone. The esterase stcI probably catalyzes the formation of versiconal hemiacetal acetate from 1-hydroxyversicolorone. The oxydoreductase stcN then probably catalyzes the biosynthetic step from versiconal to versicolorin B (VERB). The next step is performed by the versicolorin B desaturase stcL to produce versicolorin A (VERA). The ketoreductase stcU and the cytochrome P450 monooxygenase stcS are involved in the conversion of versicolorin A to demethylsterigmatocystin. The Baeyer-Villiger oxidas stcQ and the reductase stcR might be involved in the biosynthetic step from versicolorin A to demethylsterigmatocystin. The final step in the biosynthesis of sterigmatocystin is the methylation of demethylsterigmatocystin catalyzed by the methyltransferase stcP. This is Versicolorin B desaturase stcL from Emericella nidulans (strain FGSC A4 / ATCC 38163 / CBS 112.46 / NRRL 194 / M139) (Aspergillus nidulans).